Reading from the N-terminus, the 126-residue chain is Arginine decarboxylase proenzyme (126 aa).

The Schiff-base intermediate with substrate; via pyruvic acid role is filled by Ser-74. Ser-74 carries the post-translational modification Pyruvic acid (Ser); by autocatalysis. The Proton acceptor; for processing activity role is filled by His-79. Cys-94 serves as the catalytic Proton donor; for catalytic activity.

The protein belongs to the prokaryotic AdoMetDC family. Type 1 subfamily. In terms of assembly, heterooctamer of four alpha and four beta chains arranged as a tetramer of alpha/beta heterodimers. Pyruvate is required as a cofactor. Is synthesized initially as an inactive proenzyme. Formation of the active enzyme involves a self-maturation process in which the active site pyruvoyl group is generated from an internal serine residue via an autocatalytic post-translational modification. Two non-identical subunits are generated from the proenzyme in this reaction, and the pyruvate is formed at the N-terminus of the alpha chain, which is derived from the carboxyl end of the proenzyme. The post-translation cleavage follows an unusual pathway, termed non-hydrolytic serinolysis, in which the side chain hydroxyl group of the serine supplies its oxygen atom to form the C-terminus of the beta chain, while the remainder of the serine residue undergoes an oxidative deamination to produce ammonia and the pyruvoyl group blocking the N-terminus of the alpha chain.

It catalyses the reaction L-arginine + H(+) = agmatine + CO2. It participates in amine and polyamine biosynthesis; agmatine biosynthesis; agmatine from L-arginine: step 1/1. Its function is as follows. Specifically catalyzes the decarboxylation of L-arginine to agmatine. Has no S-adenosylmethionine decarboxylase (AdoMetDC) activity. In Pyrobaculum neutrophilum (strain DSM 2338 / JCM 9278 / NBRC 100436 / V24Sta) (Thermoproteus neutrophilus), this protein is Arginine decarboxylase proenzyme.